The sequence spans 86 residues: Putative membrane protein insertion efficiency factor (86 aa).

Belongs to the UPF0161 family.

Its subcellular location is the cell inner membrane. Functionally, could be involved in insertion of integral membrane proteins into the membrane. This is Putative membrane protein insertion efficiency factor from Cellvibrio japonicus (strain Ueda107) (Pseudomonas fluorescens subsp. cellulosa).